Reading from the N-terminus, the 333-residue chain is DNA repair and recombination protein RadA (333 aa).

Residue 127 to 134 (GEFGSGKT) coordinates ATP.

It belongs to the eukaryotic RecA-like protein family.

Involved in DNA repair and in homologous recombination. Binds and assemble on single-stranded DNA to form a nucleoprotein filament. Hydrolyzes ATP in a ssDNA-dependent manner and promotes DNA strand exchange between homologous DNA molecules. The sequence is that of DNA repair and recombination protein RadA from Pyrobaculum arsenaticum (strain DSM 13514 / JCM 11321 / PZ6).